Reading from the N-terminus, the 355-residue chain is Protein RecA (355 aa).

G67–T74 is an ATP binding site.

This sequence belongs to the RecA family.

Its subcellular location is the cytoplasm. Its function is as follows. Can catalyze the hydrolysis of ATP in the presence of single-stranded DNA, the ATP-dependent uptake of single-stranded DNA by duplex DNA, and the ATP-dependent hybridization of homologous single-stranded DNAs. It interacts with LexA causing its activation and leading to its autocatalytic cleavage. This is Protein RecA from Histophilus somni (strain 2336) (Haemophilus somnus).